We begin with the raw amino-acid sequence, 155 residues long: 6,7-dimethyl-8-ribityllumazine synthase (155 aa).

Residues Phe23, Ala57–Glu59, and Ala81–Ile83 contribute to the 5-amino-6-(D-ribitylamino)uracil site. Residue Ser86 to Thr87 participates in (2S)-2-hydroxy-3-oxobutyl phosphate binding. The Proton donor role is filled by His89. Phe114 is a 5-amino-6-(D-ribitylamino)uracil binding site. Arg128 is a (2S)-2-hydroxy-3-oxobutyl phosphate binding site.

Belongs to the DMRL synthase family.

The enzyme catalyses (2S)-2-hydroxy-3-oxobutyl phosphate + 5-amino-6-(D-ribitylamino)uracil = 6,7-dimethyl-8-(1-D-ribityl)lumazine + phosphate + 2 H2O + H(+). It functions in the pathway cofactor biosynthesis; riboflavin biosynthesis; riboflavin from 2-hydroxy-3-oxobutyl phosphate and 5-amino-6-(D-ribitylamino)uracil: step 1/2. Functionally, catalyzes the formation of 6,7-dimethyl-8-ribityllumazine by condensation of 5-amino-6-(D-ribitylamino)uracil with 3,4-dihydroxy-2-butanone 4-phosphate. This is the penultimate step in the biosynthesis of riboflavin. In Geobacter metallireducens (strain ATCC 53774 / DSM 7210 / GS-15), this protein is 6,7-dimethyl-8-ribityllumazine synthase.